The sequence spans 239 residues: tRNA (guanine-N(7)-)-methyltransferase (239 aa).

4 residues coordinate S-adenosyl-L-methionine: glutamate 69, glutamate 94, aspartate 121, and aspartate 144. Residue aspartate 144 is part of the active site. Residues lysine 148, aspartate 180, and 217–220 (TNFE) each bind substrate.

It belongs to the class I-like SAM-binding methyltransferase superfamily. TrmB family. In terms of assembly, monomer.

The enzyme catalyses guanosine(46) in tRNA + S-adenosyl-L-methionine = N(7)-methylguanosine(46) in tRNA + S-adenosyl-L-homocysteine. Its pathway is tRNA modification; N(7)-methylguanine-tRNA biosynthesis. In terms of biological role, catalyzes the formation of N(7)-methylguanine at position 46 (m7G46) in tRNA. The protein is tRNA (guanine-N(7)-)-methyltransferase of Buchnera aphidicola subsp. Schizaphis graminum (strain Sg).